Consider the following 715-residue polypeptide: Palmitoyltransferase ZDHHC5 (715 aa).

The Cytoplasmic segment spans residues 1 to 13; the sequence is MPAESGKRFKPSK. The helical transmembrane segment at 14 to 34 threads the bilayer; sequence YVPVSAAAIFLVGATTLFFAF. Residues 35–52 are Extracellular-facing; that stretch reads TCPGLSLDVSPAVPIYNA. Residues 53 to 73 form a helical membrane-spanning segment; that stretch reads IMFLFVLANFSMATFMDPGIF. The Cytoplasmic portion of the chain corresponds to 74–148; sequence PRAEEDEDKE…NCIGRRNYRY (75 aa). Tyr91 is modified (phosphotyrosine). In terms of domain architecture, DHHC spans 104 to 154; it reads KWCATCRFYRPPRCSHCSVCDNCVEEFDHHCPWVNNCIGRRNYRYFFLFLL. Residue Cys134 is the S-palmitoyl cysteine intermediate of the active site. A helical transmembrane segment spans residues 149-169; it reads FFLFLLSLTAHIMGVFGFGLL. The Extracellular segment spans residues 170-191; it reads YVLCHIEELSGVRTAVTMAVMC. A helical membrane pass occupies residues 192-212; that stretch reads VAGLFFIPVAGLTGFHVVLVA. Topologically, residues 213-715 are cytoplasmic; sequence RGRTTNEQVT…VGGTTYEISV (503 aa). Ser247 carries the phosphoserine modification. Positions 289 to 715 are disordered; the sequence is GELRRTKSKG…VGGTTYEISV (427 aa). Thr294 carries the post-translational modification Phosphothreonine. 2 positions are modified to phosphoserine: Ser296 and Ser299. Thr303 is subject to Phosphothreonine. Ser345 carries the phosphoserine modification. Phosphothreonine occurs at positions 348 and 350. A compositionally biased stretch (low complexity) spans 359–373; it reads SSSSTSAAMPHSSSA. 4 positions are modified to phosphoserine: Ser380, Ser398, Ser406, and Ser409. Thr411 is modified (phosphothreonine). A phosphoserine mark is found at Ser415, Ser425, Ser429, and Ser432. Over residues 422–432 the composition is skewed to low complexity; the sequence is SSGSRSSSLKS. Thr436 bears the Phosphothreonine mark. The segment covering 442–478 has biased composition (polar residues); the sequence is QLQSIRSEGTTSTSYKSLANQTRNGSLSYDSLLTPSD. A phosphoserine mark is found at Ser529 and Ser554. Residues 581 to 597 show a composition bias toward low complexity; sequence PRTSSSSDDSKRSPLSK. Arg617 carries the post-translational modification Omega-N-methylarginine. Position 621 is a phosphoserine (Ser621). Thr659 carries the phosphothreonine modification. Positions 666–677 are enriched in polar residues; that stretch reads LKTTYSKSNGQP. Phosphoserine is present on residues Ser684 and Ser694. An Omega-N-methylarginine modification is found at Arg697.

It belongs to the DHHC palmitoyltransferase family. ERF2/ZDHHC9 subfamily. In terms of processing, autopalmitoylated. Palmitoylation of the C-terminal tail regulates stimulation-dependent plasma membrane motility. Phosphorylation regulates association with endocytic proteins and its subcellular localization. Phosphorylation by LYN during fatty acid uptake leads to inactivation of the activity.

Its subcellular location is the cell membrane. The catalysed reaction is L-cysteinyl-[protein] + hexadecanoyl-CoA = S-hexadecanoyl-L-cysteinyl-[protein] + CoA. Palmitoyltransferase that catalyzes the addition of palmitate onto various protein substrates such as CTNND2, CD36, GSDMD, NLRP3, NOD1, NOD2, STAT3 and S1PR1 thus plays a role in various biological processes including cell adhesion, inflammation, fatty acid uptake, bacterial sensing or cardiac functions. Plays an important role in the regulation of synapse efficacy by mediating palmitoylation of delta-catenin/CTNND2, thereby increasing synaptic delivery and surface stabilization of alpha-amino-3-hydroxy-5-methyl-4-isoxazole propionic acid receptors (AMPARs). Under basal conditions, remains at the synaptic membrane through FYN-mediated phosphorylation that prevents association with endocytic proteins. Neuronal activity enhances the internalization and trafficking of DHHC5 from spines to dendritic shafts where it palmitoylates delta-catenin/CTNND2. Regulates cell adhesion at the plasma membrane by palmitoylating GOLGA7B and DSG2. Plays a role in innate immune response by mediating the palmitoylation of NOD1 and NOD2 and their proper recruitment to the bacterial entry site and phagosomes. Also participates in fatty acid uptake by palmitoylating CD36 and thereby targeting it to the plasma membrane. Upon binding of fatty acids to CD36, gets phosphorylated by LYN leading to inactivation and subsequent CD36 caveolar endocytosis. Controls oligodendrocyte development by catalyzing STAT3 palmitoylation. Acts as a regulator of inflammatory response by mediating palmitoylation of NLRP3 and GSDMD. Palmitoylates NLRP3 to promote inflammasome assembly and activation. Activates pyroptosis by catalyzing palmitoylation of gasdermin-D (GSDMD), thereby promoting membrane translocation and pore formation of GSDMD. This chain is Palmitoyltransferase ZDHHC5 (Zdhhc5), found in Rattus norvegicus (Rat).